Consider the following 259-residue polypeptide: 5'-nucleotidase SurE (259 aa).

Positions 8, 9, 40, and 95 each coordinate a divalent metal cation.

This sequence belongs to the SurE nucleotidase family. A divalent metal cation is required as a cofactor.

Its subcellular location is the cytoplasm. The enzyme catalyses a ribonucleoside 5'-phosphate + H2O = a ribonucleoside + phosphate. Functionally, nucleotidase that shows phosphatase activity on nucleoside 5'-monophosphates. This Oleidesulfovibrio alaskensis (strain ATCC BAA-1058 / DSM 17464 / G20) (Desulfovibrio alaskensis) protein is 5'-nucleotidase SurE.